A 491-amino-acid chain; its full sequence is Cysteine--tRNA ligase (491 aa).

Cys29 contacts Zn(2+). The 'HIGH' region signature appears at 31-41; that stretch reads PTVYDFAHIGN. Positions 227, 252, and 256 each coordinate Zn(2+). The 'KMSKS' region motif lies at 285–289; sequence KMSKS. Lys288 provides a ligand contact to ATP.

Belongs to the class-I aminoacyl-tRNA synthetase family. Monomer. It depends on Zn(2+) as a cofactor.

It is found in the cytoplasm. The enzyme catalyses tRNA(Cys) + L-cysteine + ATP = L-cysteinyl-tRNA(Cys) + AMP + diphosphate. The polypeptide is Cysteine--tRNA ligase (Rhodopseudomonas palustris (strain TIE-1)).